Reading from the N-terminus, the 385-residue chain is Putative actin-25 (385 aa).

Belongs to the actin family.

The protein resides in the cytoplasm. Its subcellular location is the cytoskeleton. The enzyme catalyses ATP + H2O = ADP + phosphate + H(+). Functionally, actins are highly conserved proteins that are involved in various types of cell motility and are ubiquitously expressed in all eukaryotic cells. Multiple isoforms are involved in various cellular functions such as cytoskeleton structure, cell mobility, chromosome movement and muscle contraction. The polypeptide is Putative actin-25 (act25) (Dictyostelium discoideum (Social amoeba)).